The chain runs to 249 residues: Triosephosphate isomerase (249 aa).

N12 and K14 together coordinate substrate. At K14 the chain carries N6-acetyllysine. 3'-nitrotyrosine is present on Y68. S80 is modified (phosphoserine). The active-site Electrophile is the H96. S106 carries the phosphoserine modification. Residue K142 forms a Glycyl lysine isopeptide (Lys-Gly) (interchain with G-Cter in SUMO1) linkage. K149 bears the N6-succinyllysine mark. An N6-acetyllysine; alternate modification is found at K156. K156 is modified (N6-succinyllysine; alternate). Position 159 is a phosphoserine (S159). E166 functions as the Proton acceptor in the catalytic mechanism. Residue T173 is modified to Phosphothreonine. Residue K194 is modified to N6-acetyllysine; alternate. The residue at position 194 (K194) is an N6-succinyllysine; alternate. The residue at position 194 (K194) is an N6-methyllysine; alternate. S198 carries the phosphoserine modification. The residue at position 209 (Y209) is a 3'-nitrotyrosine. Phosphoserine is present on S212. Position 214 is a phosphothreonine (T214). Phosphoserine is present on S223. Position 238 is an N6-acetyllysine (K238).

Belongs to the triosephosphate isomerase family. In terms of assembly, homodimer.

The protein localises to the cytoplasm. It carries out the reaction dihydroxyacetone phosphate = methylglyoxal + phosphate. It catalyses the reaction D-glyceraldehyde 3-phosphate = dihydroxyacetone phosphate. The protein operates within carbohydrate degradation; glycolysis; D-glyceraldehyde 3-phosphate from glycerone phosphate: step 1/1. It participates in carbohydrate biosynthesis; gluconeogenesis. Its function is as follows. Triosephosphate isomerase is an extremely efficient metabolic enzyme that catalyzes the interconversion between dihydroxyacetone phosphate (DHAP) and D-glyceraldehyde-3-phosphate (G3P) in glycolysis and gluconeogenesis. In terms of biological role, it is also responsible for the non-negligible production of methylglyoxal a reactive cytotoxic side-product that modifies and can alter proteins, DNA and lipids. This is Triosephosphate isomerase (TPI1) from Canis lupus familiaris (Dog).